Here is a 309-residue protein sequence, read N- to C-terminus: ATP synthase gamma chain (309 aa).

Belongs to the ATPase gamma chain family. As to quaternary structure, F-type ATPases have 2 components, CF(1) - the catalytic core - and CF(0) - the membrane proton channel. CF(1) has five subunits: alpha(3), beta(3), gamma(1), delta(1), epsilon(1). CF(0) has three main subunits: a, b and c.

The protein resides in the cell membrane. Its function is as follows. Produces ATP from ADP in the presence of a proton gradient across the membrane. The gamma chain is believed to be important in regulating ATPase activity and the flow of protons through the CF(0) complex. This chain is ATP synthase gamma chain, found in Ligilactobacillus salivarius (strain UCC118) (Lactobacillus salivarius).